We begin with the raw amino-acid sequence, 130 residues long: Large ribosomal subunit protein eL22 (130 aa).

The disordered stretch occupies residues 1-21 (MPGKTAQKGGRPSGKGKKKKQ). Residues 17 to 20 (KKKK) carry the Nuclear localization signal motif.

The protein belongs to the eukaryotic ribosomal protein eL22 family.

This is Large ribosomal subunit protein eL22 (RPL22) from Tripneustes gratilla (Hawaian sea urchin).